Here is a 259-residue protein sequence, read N- to C-terminus: UPF0246 protein Aave_1172 (259 aa).

The protein belongs to the UPF0246 family.

In Paracidovorax citrulli (strain AAC00-1) (Acidovorax citrulli), this protein is UPF0246 protein Aave_1172.